The sequence spans 38 residues: Photosystem II reaction center protein L (38 aa).

A helical membrane pass occupies residues 17-37; the sequence is SLYWGLLLIFVLAVLFSSYIF.

Belongs to the PsbL family. PSII is composed of 1 copy each of membrane proteins PsbA, PsbB, PsbC, PsbD, PsbE, PsbF, PsbH, PsbI, PsbJ, PsbK, PsbL, PsbM, PsbT, PsbX, PsbY, PsbZ, Psb30/Ycf12, at least 3 peripheral proteins of the oxygen-evolving complex and a large number of cofactors. It forms dimeric complexes.

It localises to the plastid. The protein resides in the chloroplast thylakoid membrane. Functionally, one of the components of the core complex of photosystem II (PSII). PSII is a light-driven water:plastoquinone oxidoreductase that uses light energy to abstract electrons from H(2)O, generating O(2) and a proton gradient subsequently used for ATP formation. It consists of a core antenna complex that captures photons, and an electron transfer chain that converts photonic excitation into a charge separation. This subunit is found at the monomer-monomer interface and is required for correct PSII assembly and/or dimerization. This Oltmannsiellopsis viridis (Marine flagellate) protein is Photosystem II reaction center protein L.